Reading from the N-terminus, the 298-residue chain is 2-dehydropantoate 2-reductase (298 aa).

NADP(+) contacts are provided by residues 7 to 12 (GGGSVG), Asn98, and Ala124. Asn98 is a binding site for substrate. Catalysis depends on Lys179, which acts as the Proton donor. Substrate contacts are provided by Asn183, Asn187, Asn197, and Ser246. Position 258 (Glu258) interacts with NADP(+).

It belongs to the ketopantoate reductase family.

It is found in the cytoplasm. It carries out the reaction (R)-pantoate + NADP(+) = 2-dehydropantoate + NADPH + H(+). It functions in the pathway cofactor biosynthesis; (R)-pantothenate biosynthesis; (R)-pantoate from 3-methyl-2-oxobutanoate: step 2/2. Functionally, catalyzes the NADPH-dependent reduction of ketopantoate into pantoic acid. The sequence is that of 2-dehydropantoate 2-reductase (panE) from Bacillus subtilis (strain 168).